Reading from the N-terminus, the 168-residue chain is Ecotin (168 aa).

An N-terminal signal peptide occupies residues 1-21; that stretch reads MKRLSIAITSLLMAASASTIA. Residues Cys76 and Cys113 are joined by a disulfide bond.

Belongs to the protease inhibitor I11 (ecotin) family. In terms of assembly, homodimer.

It localises to the periplasm. In terms of biological role, general inhibitor of pancreatic serine proteases: inhibits chymotrypsin, trypsin, elastases, factor X, kallikrein as well as a variety of other proteases. The polypeptide is Ecotin (Yersinia enterocolitica serotype O:8 / biotype 1B (strain NCTC 13174 / 8081)).